The following is a 393-amino-acid chain: NAD(P)H-quinone oxidoreductase subunit H, chloroplastic (393 aa).

It belongs to the complex I 49 kDa subunit family. As to quaternary structure, NDH is composed of at least 16 different subunits, 5 of which are encoded in the nucleus.

It is found in the plastid. The protein localises to the chloroplast thylakoid membrane. The catalysed reaction is a plastoquinone + NADH + (n+1) H(+)(in) = a plastoquinol + NAD(+) + n H(+)(out). The enzyme catalyses a plastoquinone + NADPH + (n+1) H(+)(in) = a plastoquinol + NADP(+) + n H(+)(out). NDH shuttles electrons from NAD(P)H:plastoquinone, via FMN and iron-sulfur (Fe-S) centers, to quinones in the photosynthetic chain and possibly in a chloroplast respiratory chain. The immediate electron acceptor for the enzyme in this species is believed to be plastoquinone. Couples the redox reaction to proton translocation, and thus conserves the redox energy in a proton gradient. The polypeptide is NAD(P)H-quinone oxidoreductase subunit H, chloroplastic (Nicotiana sylvestris (Wood tobacco)).